A 596-amino-acid polypeptide reads, in one-letter code: DNA mismatch repair protein MutL (596 aa).

Belongs to the DNA mismatch repair MutL/HexB family.

Functionally, this protein is involved in the repair of mismatches in DNA. It is required for dam-dependent methyl-directed DNA mismatch repair. May act as a 'molecular matchmaker', a protein that promotes the formation of a stable complex between two or more DNA-binding proteins in an ATP-dependent manner without itself being part of a final effector complex. The polypeptide is DNA mismatch repair protein MutL (Leptospira borgpetersenii serovar Hardjo-bovis (strain JB197)).